Consider the following 637-residue polypeptide: 3D-(3,5/4)-trihydroxycyclohexane-1,2-dione hydrolase (637 aa).

Position 65 (Glu-65) interacts with thiamine diphosphate. Positions 441-521 (SLPGDLQRLW…INVLLFDNSG (81 aa)) are thiamine pyrophosphate binding. Positions 492 and 519 each coordinate Mg(2+).

This sequence belongs to the TPP enzyme family. Mg(2+) serves as cofactor. Requires thiamine diphosphate as cofactor.

The catalysed reaction is 3D-3,5/4-trihydroxycyclohexane-1,2-dione + H2O = 5-deoxy-D-glucuronate + H(+). It participates in polyol metabolism; myo-inositol degradation into acetyl-CoA; acetyl-CoA from myo-inositol: step 3/7. Involved in the cleavage of the C1-C2 bond of 3D-(3,5/4)-trihydroxycyclohexane-1,2-dione (THcHDO) to yield 5-deoxy-glucuronate (5DG). The protein is 3D-(3,5/4)-trihydroxycyclohexane-1,2-dione hydrolase of Halalkalibacterium halodurans (strain ATCC BAA-125 / DSM 18197 / FERM 7344 / JCM 9153 / C-125) (Bacillus halodurans).